The chain runs to 1344 residues: Regulatory-associated protein of TOR 1 (1344 aa).

Basic and acidic residues predominate over residues 28 to 44 (CVSSHDDGDSRRKDSEA). Disordered regions lie at residues 28-56 (CVSS…GTTE) and 771-818 (ASTD…DSVS). Over residues 785–816 (SSSPLGSSGLMQGSPLSDDSSLHSDSGMMHDS) the composition is skewed to low complexity. WD repeat units follow at residues 1025–1064 (RFET…LLNG), 1070–1111 (FPDK…GKQK), 1125–1164 (GARD…LVRS), 1168–1208 (ESEC…PLVC), 1214–1255 (QKVE…DTYL), 1259–1298 (AHRG…LGII), and 1307–1344 (QKIG…SQAR).

It belongs to the WD repeat RAPTOR family. As to quaternary structure, interacts with TOR, ATPK1 and ML1. Interacts with KIN10. In terms of processing, phosphorylated by KIN10. As to expression, expressed in roots, leaves, flowers and seeds.

The protein localises to the cytoplasm. Functionally, probable component of the plant TOR kinase pathway that recruits substrates for TOR. Modulates plant cell growth and regulates the activity of ATPK1 kinase in response to osmotic stress. The protein is Regulatory-associated protein of TOR 1 (RAPTOR1) of Arabidopsis thaliana (Mouse-ear cress).